A 235-amino-acid chain; its full sequence is Leucyl/phenylalanyl-tRNA--protein transferase (235 aa).

Belongs to the L/F-transferase family.

It is found in the cytoplasm. It catalyses the reaction N-terminal L-lysyl-[protein] + L-leucyl-tRNA(Leu) = N-terminal L-leucyl-L-lysyl-[protein] + tRNA(Leu) + H(+). The enzyme catalyses N-terminal L-arginyl-[protein] + L-leucyl-tRNA(Leu) = N-terminal L-leucyl-L-arginyl-[protein] + tRNA(Leu) + H(+). It carries out the reaction L-phenylalanyl-tRNA(Phe) + an N-terminal L-alpha-aminoacyl-[protein] = an N-terminal L-phenylalanyl-L-alpha-aminoacyl-[protein] + tRNA(Phe). Functions in the N-end rule pathway of protein degradation where it conjugates Leu, Phe and, less efficiently, Met from aminoacyl-tRNAs to the N-termini of proteins containing an N-terminal arginine or lysine. The protein is Leucyl/phenylalanyl-tRNA--protein transferase of Aeromonas hydrophila subsp. hydrophila (strain ATCC 7966 / DSM 30187 / BCRC 13018 / CCUG 14551 / JCM 1027 / KCTC 2358 / NCIMB 9240 / NCTC 8049).